A 629-amino-acid chain; its full sequence is Chaperone protein DnaK (629 aa).

A Phosphothreonine; by autocatalysis modification is found at T195. Disordered regions lie at residues 514 to 533 (EAEQNAEADRKRRERVEKRN) and 543 to 629 (LGQL…KPAE). Residues 555 to 590 (DAKDRLKAAADEAEEAVRSDDDSRIERAQKQLEEAM) show a composition bias toward basic and acidic residues. The segment covering 595-614 (TAAQSGSQNQAGQGAQTQTG) has biased composition (low complexity). The span at 615–629 (RQEDDVIDADFKPAE) shows a compositional bias: basic and acidic residues.

Belongs to the heat shock protein 70 family.

Functionally, acts as a chaperone. This chain is Chaperone protein DnaK, found in Deinococcus geothermalis (strain DSM 11300 / CIP 105573 / AG-3a).